A 181-amino-acid polypeptide reads, in one-letter code: Peptidyl-tRNA hydrolase 2, mitochondrial (181 aa).

A helical transmembrane segment spans residues 10–32; that stretch reads YLVHPGTLSLAAGVACGMCLGWG. Glycyl lysine isopeptide (Lys-Gly) (interchain with G-Cter in ubiquitin) cross-links involve residues Lys78, Lys83, Lys97, Lys108, Lys117, and Lys179.

Belongs to the PTH2 family. Monomer. Post-translationally, ubiquitinated by PRKN during mitophagy, leading to its degradation and enhancement of mitophagy. Deubiquitinated by USP30.

Its subcellular location is the mitochondrion outer membrane. The catalysed reaction is an N-acyl-L-alpha-aminoacyl-tRNA + H2O = an N-acyl-L-amino acid + a tRNA + H(+). Its function is as follows. Peptidyl-tRNA hydrolase which releases tRNAs from the ribosome during protein synthesis. Promotes caspase-independent apoptosis by regulating the function of two transcriptional regulators, AES and TLE1. The protein is Peptidyl-tRNA hydrolase 2, mitochondrial (Ptrh2) of Mus musculus (Mouse).